The primary structure comprises 376 residues: Chaperone protein DnaJ (376 aa).

A J domain is found at 5-70 (DYYEVLGVAR…NKRRAYDAHG (66 aa)). Residues 132-209 (GIERRIEIPT…CHGAGRVEEN (78 aa)) form a CR-type zinc finger. Residues C145, C148, C161, C164, C183, C186, C197, and C200 each contribute to the Zn(2+) site. CXXCXGXG motif repeat units lie at residues 145–152 (CVSCHGSG), 161–168 (CGTCHGRG), 183–190 (CPHCDGRG), and 197–204 (CKTCHGAG).

This sequence belongs to the DnaJ family. Homodimer. It depends on Zn(2+) as a cofactor.

Its subcellular location is the cytoplasm. Its function is as follows. Participates actively in the response to hyperosmotic and heat shock by preventing the aggregation of stress-denatured proteins and by disaggregating proteins, also in an autonomous, DnaK-independent fashion. Unfolded proteins bind initially to DnaJ; upon interaction with the DnaJ-bound protein, DnaK hydrolyzes its bound ATP, resulting in the formation of a stable complex. GrpE releases ADP from DnaK; ATP binding to DnaK triggers the release of the substrate protein, thus completing the reaction cycle. Several rounds of ATP-dependent interactions between DnaJ, DnaK and GrpE are required for fully efficient folding. Also involved, together with DnaK and GrpE, in the DNA replication of plasmids through activation of initiation proteins. The sequence is that of Chaperone protein DnaJ from Xanthomonas oryzae pv. oryzae (strain PXO99A).